Reading from the N-terminus, the 155-residue chain is MKTQKRETNPIVTAIESIAEPLCIAEGFELVHVECVSDQGGMIVRIYLDKPGGITLDDCVHMTRHLGDIIDVELEEISAYRLEISSPGAKRPLKKLADFERFLGSRVKVEAVEPIGGRLKFTGILSKVQDGCVEVVVNNEPVVFHFEQISKSRLA.

This sequence belongs to the RimP family.

It is found in the cytoplasm. In terms of biological role, required for maturation of 30S ribosomal subunits. This is Ribosome maturation factor RimP from Desulforapulum autotrophicum (strain ATCC 43914 / DSM 3382 / VKM B-1955 / HRM2) (Desulfobacterium autotrophicum).